We begin with the raw amino-acid sequence, 389 residues long: Protein MEI2-like 7 (389 aa).

Residues 170-184 (RRGMSKVYKPRKPQR) are compositionally biased toward basic residues. Positions 170–211 (RRGMSKVYKPRKPQRAGRERSPSPSPVFTTRPMSPTPPMQKL) are disordered. The RRM domain occupies 216-320 (TTVMVRNIPN…KIIDIRAARI (105 aa)). Residues 351–370 (PRDGSTAGAGAPSPPAVKTV) form a disordered region.

Probable RNA-binding protein that may play a role in growth regulation. This Oryza sativa subsp. japonica (Rice) protein is Protein MEI2-like 7 (OML7).